A 370-amino-acid polypeptide reads, in one-letter code: Allatostatins (370 aa).

A signal peptide spans 1–27 (MSGPRTCFCLPSALVLVLLSLSTSALG). Positions 28-65 (TAPEPSGVHEESPAGGGTDLLPHPEDLSASDNPDLEFV) are excised as a propeptide. Residues 29–58 (APEPSGVHEESPAGGGTDLLPHPEDLSASD) form a disordered region. 4 positions are modified to leucine amide: leucine 73, leucine 94, leucine 105, and leucine 117. Residues 121 to 151 (DYDYYGEEDEDDQQAIGDEDIEESDVGDLMD) constitute a propeptide that is removed on maturation. Leucine 161, leucine 172, leucine 188, leucine 200, leucine 213, and leucine 232 each carry leucine amide. The propeptide occupies 236–251 (SDDIDFRELEEKFAED). A Leucine amide modification is found at leucine 264. The propeptide occupies 268 to 345 (EVEPSELEAV…ITPEEFSRMV (78 aa)). The segment at 273 to 298 (ELEAVRNEEKDNSSVHDKKNNTNDMH) is disordered. Leucine 353 is subject to Leucine amide. Position 364 is an isoleucine amide (isoleucine 364). The propeptide occupies 368–370 (SER).

It belongs to the allatostatin family. Brain, subesophageal ganglion and corpus allatum.

It localises to the secreted. In terms of biological role, neuropeptide inhibitors of juvenile hormone synthesis and gut muscle contraction. The protein is Allatostatins of Diploptera punctata (Pacific beetle cockroach).